The following is an 89-amino-acid chain: Serine-rich and transmembrane domain-containing 2 (89 aa).

An N-linked (GlcNAc...) asparagine glycan is attached at Asn11. The helical transmembrane segment at 38–58 (YVGLFLSLLAILLILLFTMLL) threads the bilayer.

Its subcellular location is the membrane. In Mus musculus (Mouse), this protein is Serine-rich and transmembrane domain-containing 2.